The following is a 139-amino-acid chain: 3-hydroxyacyl-[acyl-carrier-protein] dehydratase FabZ (139 aa).

Residue histidine 47 is part of the active site.

Belongs to the thioester dehydratase family. FabZ subfamily.

The protein resides in the cytoplasm. It carries out the reaction a (3R)-hydroxyacyl-[ACP] = a (2E)-enoyl-[ACP] + H2O. Its function is as follows. Involved in unsaturated fatty acids biosynthesis. Catalyzes the dehydration of short chain beta-hydroxyacyl-ACPs and long chain saturated and unsaturated beta-hydroxyacyl-ACPs. This is 3-hydroxyacyl-[acyl-carrier-protein] dehydratase FabZ from Oenococcus oeni (strain ATCC BAA-331 / PSU-1).